We begin with the raw amino-acid sequence, 205 residues long: Basigin (205 aa).

An N-terminal signal peptide occupies residues 1–18; sequence MAAALFVLLGFALLGTHG. The Ig-like C2-type domain maps to 19–103; sequence ASGAAGTVFT…MGTANIQLHG (85 aa). Over 19-205 the chain is Extracellular; that stretch reads ASGAAGTVFT…AIITLRVRSH (187 aa). 2 cysteine pairs are disulfide-bonded: Cys41-Cys87 and Cys126-Cys185. N-linked (GlcNAc...) asparagine glycosylation is found at Asn44, Asn152, and Asn186. The Ig-like V-type domain occupies 105–199; that stretch reads PRVKAVKSSE…SKGSDQAIIT (95 aa).

Homooligomer. Interacts with VEGFA, KDR/VEGFR2, PPIA/CYPA, SLC16A12, SLC16A11, ATP1B2, MAG, L1CAM and AJAP1. Interacts with SLC16A1; interaction mediates SLC16A1 targeting to the plasma membrane. Interacts with SLC16A3; interaction mediates SLC16A3 targeting to the plasma membrane. Interacts with PPIL2; regulates BSG transport to the cell membrane. Interacts with XKR8; promoting its localization at the cell membrane. Interacts with SLC16A6; this interaction mediates targeting to the plasma membrane.

It is found in the cell membrane. The protein localises to the endoplasmic reticulum membrane. It localises to the basolateral cell membrane. Its function is as follows. Signaling receptor for cyclophilins, essential for PPIA/CYPA and PPIB/CYPB-dependent signaling related to chemotaxis and adhesion of immune cells. Plays an important role in targeting the monocarboxylate transporters SLC16A1/GLUT1, SLC16A3, SLC16A8, SLC16A11 and SLC16A12 to the plasma membrane. Acts as a coreceptor for vascular endothelial growth factor receptor 2 (KDR/VEGFR2) in endothelial cells enhancing its VEGFA-mediated activation and downstream signaling. Promotes angiogenesis through EPAS1/HIF2A-mediated up-regulation of VEGFA and KDR/VEGFR2 in endothelial cells. In Bos taurus (Bovine), this protein is Basigin (BSG).